A 290-amino-acid polypeptide reads, in one-letter code: Agroclavine dehydrogenase (290 aa).

This sequence belongs to the fgaFS/easG family. In terms of assembly, monomer.

It catalyses the reaction agroclavine + NADP(+) = didehydroagroclavine + NADPH + H(+). The protein operates within alkaloid biosynthesis; ergot alkaloid biosynthesis. In terms of biological role, agroclavine dehydrogenase; part of the gene cluster that mediates the biosynthesis of fungal ergot alkaloid. DmaW catalyzes the first step of ergot alkaloid biosynthesis by condensing dimethylallyl diphosphate (DMAP) and tryptophan to form 4-dimethylallyl-L-tryptophan. The second step is catalyzed by the methyltransferase easF that methylates 4-dimethylallyl-L-tryptophan in the presence of S-adenosyl-L-methionine, resulting in the formation of 4-dimethylallyl-L-abrine. The catalase easC and the FAD-dependent oxidoreductase easE then transform 4-dimethylallyl-L-abrine to chanoclavine-I which is further oxidized by easD in the presence of NAD(+), resulting in the formation of chanoclavine-I aldehyde. Agroclavine dehydrogenase easG then mediates the conversion of chanoclavine-I aldehyde to agroclavine via a non-enzymatic adduct reaction: the substrate is an iminium intermediate that is formed spontaneously from chanoclavine-I aldehyde in the presence of glutathione. The presence of easA is not required to complete this reaction. Further conversion of agroclavine to paspalic acid is a two-step process involving oxidation of agroclavine to elymoclavine and of elymoclavine to paspalic acid, the second step being performed by the elymoclavine oxidase cloA. Paspalic acid is then further converted to D-lysergic acid. Ergopeptines are assembled from D-lysergic acid and three different amino acids by the D-lysergyl-peptide-synthetases composed each of a monomudular and a trimodular nonribosomal peptide synthetase subunit. LpsB and lpsC encode the monomodular subunits responsible for D-lysergic acid activation and incorporation into the ergopeptine backbone. LpsA1 and A2 subunits encode the trimodular nonribosomal peptide synthetase assembling the tripeptide portion of ergopeptines. LpsA1 is responsible for formation of the major ergopeptine, ergotamine, and lpsA2 for alpha-ergocryptine, the minor ergopeptine of the total alkaloid mixture elaborated by C.purpurea. D-lysergyl-tripeptides are assembled by the nonribosomal peptide synthetases and released as N-(D-lysergyl-aminoacyl)-lactams. Cyclolization of the D-lysergyl-tripeptides is performed by the Fe(2+)/2-ketoglutarate-dependent dioxygenase easH which introduces a hydroxyl group into N-(D-lysergyl-aminoacyl)-lactam at alpha-C of the aminoacyl residue followed by spontaneous condensation with the terminal lactam carbonyl group. This chain is Agroclavine dehydrogenase, found in Claviceps purpurea (strain 20.1) (Ergot fungus).